A 468-amino-acid chain; its full sequence is Gasdermin-C (468 aa).

Residues 1–230 (MSYTFDWLSK…CVILTSANTK (230 aa)) form a triggers pyroptosis region.

Belongs to the gasdermin family. In terms of assembly, homooligomer; homooligomeric ring-shaped pore complex containing 27-28 subunits when inserted in the membrane. Cleavage by CASP8 relieves autoinhibition by releasing the N-terminal moiety (Gasdermin-C, N-terminal) that initiates pyroptosis. In terms of processing, palmitoylated.

The protein localises to the cytoplasm. Its subcellular location is the cytosol. The protein resides in the cell membrane. The full-length protein before cleavage is inactive: intramolecular interactions between N- and C-terminal domains mediate autoinhibition in the absence of activation signal. The intrinsic pyroptosis-inducing activity is carried by the released N-terminal moiety (Gasdermin-C, N-terminal) following cleavage by caspase CASP8. In terms of biological role, this form constitutes the precursor of the pore-forming protein: upon cleavage, the released N-terminal moiety (Gasdermin-C, N-terminal) binds to membranes and forms pores, triggering pyroptosis. Pore-forming protein that causes membrane permeabilization and pyroptosis. Produced by the cleavage of gasdermin-C by caspase CASP8 in response to death signals. After cleavage, moves to the plasma membrane where it strongly binds to membrane inner leaflet lipids. Homooligomerizes within the membrane and forms pores of 10-15 nanometers (nm) of inner diameter, triggering pyroptosis. In Mus musculus (Mouse), this protein is Gasdermin-C.